Here is a 334-residue protein sequence, read N- to C-terminus: Large ribosomal subunit protein uL3 (334 aa).

Residues 1-10 show a composition bias toward basic residues; it reads MGMKKNRPRR. The segment at 1–21 is disordered; sequence MGMKKNRPRRGSLAFSPRKRA.

It belongs to the universal ribosomal protein uL3 family. Part of the 50S ribosomal subunit. Forms a cluster with proteins L14 and L24e.

Its function is as follows. One of the primary rRNA binding proteins, it binds directly near the 3'-end of the 23S rRNA, where it nucleates assembly of the 50S subunit. The polypeptide is Large ribosomal subunit protein uL3 (Methanococcus maripaludis (strain DSM 14266 / JCM 13030 / NBRC 101832 / S2 / LL)).